The primary structure comprises 473 residues: H(+)/Cl(-) exchange transporter ClcA (473 aa).

At 1–32 the chain is on the cytoplasmic side; the sequence is MKTDTSTFLAQQIVRLRRRDQIRRLMQRDKTP. A helical transmembrane segment spans residues 33–69; the sequence is LAILLMAAVVGTLTGLVGVAFEKAVSWVQNMRIGALV. The Periplasmic segment spans residues 70–76; that stretch reads QVADHAF. A helical transmembrane segment spans residues 77–100; it reads LLWPLAFILSALLAMVGYFLVRKF. The short motif at 106–110 is the Selectivity filter part_1 element; it reads GSGIP. Position 107 (S107) interacts with chloride. Residues 109 to 116 constitute an intramembrane region (helical); the sequence is IPEIEGAL. Topologically, residues 117 to 123 are cytoplasmic; sequence EELRPVR. Transmembrane regions (helical) follow at residues 124–141 and 148–166; these read WWRV…TLGA and EGPT…LDVF. The Selectivity filter part_2 motif lies at 146 to 150; the sequence is GREGP. The Cytoplasmic segment spans residues 167–176; the sequence is RMRSAEARHT. Intramembrane regions (helical) lie at residues 177–189 and 193–201; these read LLAT…LSAA and PLAGILFII. Residues 202-214 lie on the Cytoplasmic side of the membrane; the sequence is EEMRPQFRYNLIS. Residues 215–232 traverse the membrane as a helical segment; the sequence is IKAVFTGVIMSSIVFRIF. The Periplasmic portion of the chain corresponds to 233–252; the sequence is NGEAPIIEVGKLSDAPVNTL. Residues 253 to 281 traverse the membrane as a helical segment; that stretch reads WLYLILGIIFGCVGPVFNSLVLRTQDMFQ. The Cytoplasmic segment spans residues 282-287; the sequence is RFHGGE. Residues 288 to 309 form a helical membrane-spanning segment; that stretch reads IKKWVLMGGAIGGLCGILGLIE. Residues 310–329 are Periplasmic-facing; it reads PEAAGGGFNLIPIAAAGNFS. The next 2 helical transmembrane spans lie at 330 to 349 and 355 to 376; these read VGLL…LCFS and GIFA…MAAA. Residues 355–359 carry the Selectivity filter part_3 motif; that stretch reads GIFAP. Chloride-binding residues include I356 and F357. Over 377-386 the chain is Periplasmic; it reads VLFPQYHLEA. Positions 387–401 form an intramembrane region, helical; the sequence is GTFAIAGMGALMAAS. Residues 402-404 constitute an intramembrane region (note=Loop between two helices); it reads VRA. An intramembrane region (helical) is located at residues 405–416; it reads PLTGIVLVLEMT. An intramembrane region (note=Loop between two helices) is located at residues 417–421; sequence DNYQL. Residues 422 to 438 form a helical membrane-spanning segment; the sequence is ILPMIITCLGATLLAQF. The Cytoplasmic segment spans residues 439 to 473; that stretch reads LGGKPLYSTILARTLAKQDAEQAAKNQNAPAGENT. Y445 lines the chloride pocket.

This sequence belongs to the chloride channel (TC 2.A.49) family. ClcA subfamily. Homodimer.

Its subcellular location is the cell inner membrane. The enzyme catalyses 2 chloride(in) + H(+)(out) = 2 chloride(out) + H(+)(in). Functionally, proton-coupled chloride transporter. Functions as antiport system and exchanges two chloride ions for 1 proton. Probably acts as an electrical shunt for an outwardly-directed proton pump that is linked to amino acid decarboxylation, as part of the extreme acid resistance (XAR) response. This chain is H(+)/Cl(-) exchange transporter ClcA, found in Salmonella newport (strain SL254).